Reading from the N-terminus, the 166-residue chain is Cyclin-dependent kinase 4 inhibitor D (166 aa).

M1 bears the N-acetylmethionine mark. ANK repeat units lie at residues 41 to 69, 73 to 102, 106 to 135, and 138 to 165; these read FGKT…SPNV, SGTS…DVNA, TGSL…LHHR, and SGLT…MMIP.

The protein belongs to the CDKN2 cyclin-dependent kinase inhibitor family. Interacts with CDK6.

It is found in the nucleus. It localises to the cytoplasm. In terms of biological role, interacts strongly with CDK4 and CDK6 and inhibits them. This is Cyclin-dependent kinase 4 inhibitor D (Cdkn2d) from Mus musculus (Mouse).